A 120-amino-acid chain; its full sequence is Large ribosomal subunit protein eL18 (120 aa).

The protein belongs to the eukaryotic ribosomal protein eL18 family.

This Pyrococcus abyssi (strain GE5 / Orsay) protein is Large ribosomal subunit protein eL18.